The chain runs to 787 residues: Protocadherin beta-15 (787 aa).

A signal peptide spans 1 to 26 (MEPAGERFPEQRQVLILLLLLEVTLA). Residues 27–690 (GWEPRRYSVM…AQADSLTVYL (664 aa)) are Extracellular-facing. 5 Cadherin domains span residues 35 to 133 (VMEE…SPEF), 138 to 242 (MTLK…APEF), 247 to 347 (YEVQ…FPEL), 352 to 451 (LTSP…APAF), and 456 to 561 (YTLF…SPFV). Residue N418 is glycosylated (N-linked (GlcNAc...) asparagine). N567 carries an N-linked (GlcNAc...) asparagine glycan. Residues 568-671 (GSAPCTELVP…LVDGFSQPYL (104 aa)) enclose the Cadherin 6 domain. A helical transmembrane segment spans residues 691-711 (VVALASVSSLFLFSVFLFVAV). The Cytoplasmic segment spans residues 712 to 787 (RLCRRSRAAS…DSRRKSEFLE (76 aa)).

Its subcellular location is the cell membrane. In terms of biological role, potential calcium-dependent cell-adhesion protein. May be involved in the establishment and maintenance of specific neuronal connections in the brain. The sequence is that of Protocadherin beta-15 (PCDHB15) from Homo sapiens (Human).